A 165-amino-acid chain; its full sequence is Nucleotide-binding protein Syncc9902_1708 (165 aa).

Belongs to the YajQ family.

Its function is as follows. Nucleotide-binding protein. This Synechococcus sp. (strain CC9902) protein is Nucleotide-binding protein Syncc9902_1708.